We begin with the raw amino-acid sequence, 515 residues long: Protein DETOXIFICATION 32 (515 aa).

A compositionally biased stretch (basic and acidic residues) spans 1 to 26 (METLNVDHEDTISSEQEHRAHTKSDT). The tract at residues 1–30 (METLNVDHEDTISSEQEHRAHTKSDTDMPP) is disordered. 12 helical membrane-spanning segments follow: residues 48 to 68 (LWWL…LGAV), 90 to 110 (VISG…ATLC), 131 to 151 (IILN…TPLL), 167 to 187 (FSLW…TAKF), 194 to 214 (VIAM…LSWL), 225 to 245 (GGAV…IVYI), 276 to 296 (AVMV…AGYL), 303 to 323 (VAAL…AFGF), 347 to 367 (LIVA…TLIV), 392 to 412 (LLAL…VAVG), 418 to 438 (IVAY…GLVL), and 448 to 468 (GIWT…LFII). Positions 488–497 (GDQSNKREEI) are enriched in basic and acidic residues. The segment at 488-515 (GDQSNKREEIDLCEEDENNSNGENNHRK) is disordered. Residues 506 to 515 (NSNGENNHRK) are compositionally biased toward low complexity.

It belongs to the multi antimicrobial extrusion (MATE) (TC 2.A.66.1) family.

It is found in the membrane. This Arabidopsis thaliana (Mouse-ear cress) protein is Protein DETOXIFICATION 32.